A 194-amino-acid chain; its full sequence is Large ribosomal subunit protein eL15 (194 aa).

Residues 164-194 (AGRKARGLRRKGRGAEKVRPSLRANFRKKRR) are disordered. Basic residues predominate over residues 166 to 175 (RKARGLRRKG).

It belongs to the eukaryotic ribosomal protein eL15 family.

The chain is Large ribosomal subunit protein eL15 (rpl15e) from Archaeoglobus fulgidus (strain ATCC 49558 / DSM 4304 / JCM 9628 / NBRC 100126 / VC-16).